A 215-amino-acid chain; its full sequence is Probable transaldolase (215 aa).

Lysine 83 (schiff-base intermediate with substrate) is an active-site residue.

This sequence belongs to the transaldolase family. Type 3B subfamily.

It localises to the cytoplasm. It catalyses the reaction D-sedoheptulose 7-phosphate + D-glyceraldehyde 3-phosphate = D-erythrose 4-phosphate + beta-D-fructose 6-phosphate. Its pathway is carbohydrate degradation; pentose phosphate pathway; D-glyceraldehyde 3-phosphate and beta-D-fructose 6-phosphate from D-ribose 5-phosphate and D-xylulose 5-phosphate (non-oxidative stage): step 2/3. Functionally, transaldolase is important for the balance of metabolites in the pentose-phosphate pathway. The chain is Probable transaldolase from Moorella thermoacetica (strain ATCC 39073 / JCM 9320).